We begin with the raw amino-acid sequence, 299 residues long: NADH-cytochrome b5 reductase 2 (299 aa).

Residues 13-35 (SFKVLAPFAAAVGSVGIAYQYST) form a helical membrane-spanning segment. Residues 50–154 (DEWIDLKLAK…KGPVVKWKWE (105 aa)) form the FAD-binding FR-type domain. 157–192 (QYKSIALIGGGTGITPLYQLMHEITKNPEDKTKVNL) provides a ligand contact to FAD.

The protein belongs to the flavoprotein pyridine nucleotide cytochrome reductase family. FAD is required as a cofactor.

Its subcellular location is the mitochondrion outer membrane. It catalyses the reaction 2 Fe(III)-[cytochrome b5] + NADH = 2 Fe(II)-[cytochrome b5] + NAD(+) + H(+). Functionally, may mediate the reduction of outer membrane cytochrome b5. This is NADH-cytochrome b5 reductase 2 (MCR1) from Debaryomyces hansenii (strain ATCC 36239 / CBS 767 / BCRC 21394 / JCM 1990 / NBRC 0083 / IGC 2968) (Yeast).